The primary structure comprises 181 residues: Translation initiation factor IF-3 (181 aa).

This sequence belongs to the IF-3 family. As to quaternary structure, monomer.

It localises to the cytoplasm. IF-3 binds to the 30S ribosomal subunit and shifts the equilibrium between 70S ribosomes and their 50S and 30S subunits in favor of the free subunits, thus enhancing the availability of 30S subunits on which protein synthesis initiation begins. The polypeptide is Translation initiation factor IF-3 (Mycoplasma capricolum subsp. capricolum (strain California kid / ATCC 27343 / NCTC 10154)).